The primary structure comprises 420 residues: D-tagatose-1,6-bisphosphate aldolase subunit GatZ (420 aa).

Belongs to the GatZ/KbaZ family. GatZ subfamily. In terms of assembly, forms a complex with GatY.

It functions in the pathway carbohydrate metabolism; D-tagatose 6-phosphate degradation; D-glyceraldehyde 3-phosphate and glycerone phosphate from D-tagatose 6-phosphate: step 2/2. Functionally, component of the tagatose-1,6-bisphosphate aldolase GatYZ that is required for full activity and stability of the Y subunit. Could have a chaperone-like function for the proper and stable folding of GatY. When expressed alone, GatZ does not show any aldolase activity. Is involved in the catabolism of galactitol. The protein is D-tagatose-1,6-bisphosphate aldolase subunit GatZ of Escherichia coli O8 (strain IAI1).